Consider the following 828-residue polypeptide: Glycerol-3-phosphate acyltransferase (828 aa).

Residues 309–314 carry the HXXXXD motif motif; sequence CHRSHI.

The protein belongs to the GPAT/DAPAT family.

It localises to the cell inner membrane. It carries out the reaction sn-glycerol 3-phosphate + an acyl-CoA = a 1-acyl-sn-glycero-3-phosphate + CoA. The protein operates within phospholipid metabolism; CDP-diacylglycerol biosynthesis; CDP-diacylglycerol from sn-glycerol 3-phosphate: step 1/3. This is Glycerol-3-phosphate acyltransferase from Pseudomonas putida (strain GB-1).